The sequence spans 453 residues: Phosphoglucosamine mutase (453 aa).

The active-site Phosphoserine intermediate is Ser-105. Mg(2+) is bound by residues Ser-105, Asp-244, Asp-246, and Asp-248. Ser-105 is modified (phosphoserine).

This sequence belongs to the phosphohexose mutase family. Mg(2+) is required as a cofactor. In terms of processing, activated by phosphorylation.

It carries out the reaction alpha-D-glucosamine 1-phosphate = D-glucosamine 6-phosphate. In terms of biological role, catalyzes the conversion of glucosamine-6-phosphate to glucosamine-1-phosphate. The sequence is that of Phosphoglucosamine mutase from Chromohalobacter salexigens (strain ATCC BAA-138 / DSM 3043 / CIP 106854 / NCIMB 13768 / 1H11).